The following is a 260-amino-acid chain: 14-3-3 protein 3 (260 aa).

Belongs to the 14-3-3 family. In terms of assembly, homodimer.

The protein is 14-3-3 protein 3 (TFT3) of Solanum lycopersicum (Tomato).